A 621-amino-acid chain; its full sequence is Bifunctional protein GlmU (621 aa).

A pyrophosphorylase region spans residues 1 to 229 (MAERDLAVAI…AREIVGINDR (229 aa)). Residues 11–14 (LAAG), Lys25, Gln76, and 81–82 (GT) each bind UDP-N-acetyl-alpha-D-glucosamine. A Mg(2+)-binding site is contributed by Asp106. Residues Gly143, Glu158, Asn173, and Asn227 each coordinate UDP-N-acetyl-alpha-D-glucosamine. Position 227 (Asn227) interacts with Mg(2+). The tract at residues 230 to 250 (RQLAQAYQILQDRLKEAWMEA) is linker. The segment at 251–621 (GVTFVDPDSV…TGVGIPSCPP (371 aa)) is N-acetyltransferase. UDP-N-acetyl-alpha-D-glucosamine-binding residues include Arg332 and Lys350. His362 acts as the Proton acceptor in catalysis. Residues Tyr365 and Asn376 each contribute to the UDP-N-acetyl-alpha-D-glucosamine site. Residues Ala379, 385 to 386 (NY), Ala422, and Arg441 contribute to the acetyl-CoA site. The tract at residues 601–621 (ATPPSPQRADGTGVGIPSCPP) is disordered.

It in the N-terminal section; belongs to the N-acetylglucosamine-1-phosphate uridyltransferase family. In the C-terminal section; belongs to the transferase hexapeptide repeat family. Homotrimer. It depends on Mg(2+) as a cofactor.

It localises to the cytoplasm. It catalyses the reaction alpha-D-glucosamine 1-phosphate + acetyl-CoA = N-acetyl-alpha-D-glucosamine 1-phosphate + CoA + H(+). The catalysed reaction is N-acetyl-alpha-D-glucosamine 1-phosphate + UTP + H(+) = UDP-N-acetyl-alpha-D-glucosamine + diphosphate. It participates in nucleotide-sugar biosynthesis; UDP-N-acetyl-alpha-D-glucosamine biosynthesis; N-acetyl-alpha-D-glucosamine 1-phosphate from alpha-D-glucosamine 6-phosphate (route II): step 2/2. Its pathway is nucleotide-sugar biosynthesis; UDP-N-acetyl-alpha-D-glucosamine biosynthesis; UDP-N-acetyl-alpha-D-glucosamine from N-acetyl-alpha-D-glucosamine 1-phosphate: step 1/1. The protein operates within bacterial outer membrane biogenesis; LPS lipid A biosynthesis. Catalyzes the last two sequential reactions in the de novo biosynthetic pathway for UDP-N-acetylglucosamine (UDP-GlcNAc). The C-terminal domain catalyzes the transfer of acetyl group from acetyl coenzyme A to glucosamine-1-phosphate (GlcN-1-P) to produce N-acetylglucosamine-1-phosphate (GlcNAc-1-P), which is converted into UDP-GlcNAc by the transfer of uridine 5-monophosphate (from uridine 5-triphosphate), a reaction catalyzed by the N-terminal domain. The protein is Bifunctional protein GlmU of Synechococcus sp. (strain JA-3-3Ab) (Cyanobacteria bacterium Yellowstone A-Prime).